The sequence spans 498 residues: Flagellin (498 aa).

This sequence belongs to the bacterial flagellin family.

The protein resides in the secreted. It localises to the bacterial flagellum. Its function is as follows. Flagellin is the subunit protein which polymerizes to form the filaments of bacterial flagella. This is Flagellin (fliC) from Escherichia coli (strain K12).